Here is a 508-residue protein sequence, read N- to C-terminus: General transcription factor IIF subunit 1 (508 aa).

The residue at position 2 (Ala-2) is an N-acetylalanine. A Phosphothreonine modification is found at Thr-156. Residues 177-448 are disordered; sequence MQQRRLKDQD…SSGDVQVTED (272 aa). A phosphoserine mark is found at Ser-217, Ser-218, Ser-221, and Ser-224. The span at 232-251 shows a compositional bias: basic residues; the sequence is SKAKKKAPVTKAGRKKKKKK. Acidic residues-rich tracts occupy residues 255 to 270 and 303 to 325; these read DEAFEDSDDGDFEGQE and EQSESSEESEEEKPPEEDKEEEE. Thr-331 is modified (phosphothreonine). Acidic residues predominate over residues 343–355; it reads DDSDSSEESDIDS. Residues 364 to 374 show a composition bias toward basic residues; sequence AKKKTPPKRER. Residues Ser-377, Ser-380, Ser-381, and Ser-385 each carry the phosphoserine modification. Residues 378 to 388 are compositionally biased toward polar residues; that stretch reads GGSSKGTSRPG. Phosphothreonine is present on Thr-389. The span at 389-406 shows a compositional bias: low complexity; it reads TPSAEAASTSSTLRAAAS. The residue at position 391 (Ser-391) is a Phosphoserine. N6-acetyllysine is present on Lys-407. Polar residues predominate over residues 428–443; the sequence is GPQSLSGKSTPSSGDV. A phosphoserine mark is found at Ser-431, Ser-433, and Ser-436. Phosphothreonine is present on Thr-437. Ser-440 carries the post-translational modification Phosphoserine.

Belongs to the TFIIF alpha subunit family. In terms of assembly, heterodimer of an alpha and a beta subunit. Interacts with GTF2F2, CTDP1, TAF6/TAFII80 and URI1. Interacts with GTF2B (via C-terminus and preferentially via acetylated form); this interaction prevents binding of GTF2B to GTF2F2. Part of TBP-based Pol II pre-initiation complex (PIC), in which Pol II core assembles with general transcription factors and other specific initiation factors including GTF2E1, GTF2E2, GTF2F1, GTF2F2, TCEA1, ERCC2, ERCC3, GTF2H2, GTF2H3, GTF2H4, GTF2H5, GTF2A1, GTF2A2, GTF2B and TBP; this large multi-subunit PIC complex mediates DNA unwinding and targets Pol II core to the transcription start site where the first phosphodiester bond forms. Phosphorylated on Ser and other residues by TAF1 and casein kinase II-like kinases.

The protein localises to the nucleus. Functionally, TFIIF is a general transcription initiation factor that binds to RNA polymerase II and helps to recruit it to the initiation complex in collaboration with TFIIB. It promotes transcription elongation. This is General transcription factor IIF subunit 1 (Gtf2f1) from Rattus norvegicus (Rat).